Here is a 392-residue protein sequence, read N- to C-terminus: DNA-directed RNA polymerase subunit Rpo1C (392 aa).

Belongs to the RNA polymerase beta' chain family. Part of the RNA polymerase complex.

Its subcellular location is the cytoplasm. The enzyme catalyses RNA(n) + a ribonucleoside 5'-triphosphate = RNA(n+1) + diphosphate. DNA-dependent RNA polymerase (RNAP) catalyzes the transcription of DNA into RNA using the four ribonucleoside triphosphates as substrates. Forms part of the jaw domain. The protein is DNA-directed RNA polymerase subunit Rpo1C of Sulfurisphaera tokodaii (strain DSM 16993 / JCM 10545 / NBRC 100140 / 7) (Sulfolobus tokodaii).